The primary structure comprises 546 residues: MTMAALDVFNVPYSVPLLGSTVVILIGFIAIKALRVGSRPKGLPPGPPTEFIWGNTKQIDLFYPQYQYRKWAQQYGPVYTVMLGDTAHVVVSGLRDVRDIFIKQGASSQNRPPSRFQLLMRDGFFPGLNNGEKWRQSRRMWQAVLNNSAAKQYLPYQELETRQLLFDLLRAPTEWRDHIERYSNSVAMTMVNGRRIIDAADPRVKETIQDLYDLAETGVRGAFLDSWPFLWKLPEWMFPVCRQARKIAAKHREYIWRNYSDVAKRTSQGEVLPSVNHAIQEKLKQGWPGVSEIEGAEIGHHLLTGTTDTTASTLINWVAAMCLHPEAQKKAQEEIDRVVGPNRLPTDADAANLPYVQQVIQEAQRWITAVPLSLPRAANAPVHWGKYTIPEETGLIMNSHALHNDPDIFPEPDKFKPERWEGKPNASSNGDAQLLFTFGAGRRVCPGQHLAERSLFLVISHWLWGFDTLQATDDDKNKIPIDKDDLRPGFIVCLNPFPAKITPRTAQHRELIERIWKEELEVSLDESQQWKATPEGIARLLERVGK.

A helical transmembrane segment spans residues 11-31 (VPYSVPLLGSTVVILIGFIAI). Asn-146, Asn-258, and Asn-425 each carry an N-linked (GlcNAc...) asparagine glycan. Position 445 (Cys-445) interacts with heme.

Belongs to the cytochrome P450 family. Requires heme as cofactor.

It localises to the membrane. The protein operates within polyketide biosynthesis. Its function is as follows. Cytochrome P450 monooxygenase; part of the gene cluster that mediates the biosynthesis of asperlin, a polyketide showing anti-inflammatory, antitumor and antibiotic activities. The first step of the asperlin biosynthesis is the production of the intermediate 2,4,6-octatrienoic acid by the highly redusing polyketide synthase alnA with cleavage of the PKS product by the esterase alnB. 2,4,6-octatrienoic acid is further converted to asperlin via several steps involving the remaining enzymes from the cluster. The protein is Cytochrome P450 monooxygenase alnH of Emericella nidulans (strain FGSC A4 / ATCC 38163 / CBS 112.46 / NRRL 194 / M139) (Aspergillus nidulans).